The chain runs to 236 residues: uncharacterized protein (236 aa).

The 68-residue stretch at 7 to 74 (RTNRRDIYLK…PKIGSFVSRV (68 aa)) folds into the HTH gntR-type domain. The segment at residues 34-53 (ENELAASMGVSRTPVRESLI) is a DNA-binding region (H-T-H motif).

This is an uncharacterized protein from Streptomyces ambofaciens.